The sequence spans 213 residues: MDLATAAQVSEAVAEKMLQYRRDKSGWKICREGNGVSVSWRPSVEFPGNLYKGEGIVNGTPEQVWDCVKPLAGTLRAQWDENVNSFEIIESLTDTLLFSRTTTPSAVMKLISPRDFVDLILVRTYEDGTISSNAANVEHPSCPPNPAYVRGFNHPCGCFCEPLPGEPNKTSLVTFFQTDLSGYLPQSVVDSFFPRSMAGFYANLEKAVKKFFG.

One can recognise an START domain in the interval 1 to 213 (MDLATAAQVS…LEKAVKKFFG (213 aa)).

May be involved in the intracellular transport of sterols or other lipids. May bind cholesterol or other sterols. In Bos taurus (Bovine), this protein is StAR-related lipid transfer protein 5 (STARD5).